The following is a 348-amino-acid chain: MSDRLTLLRPDDWHIHLRDGAALANTVGDAARTFGRAIVMPNLVPPVRNAAEADAYRQRILAARPAASRFEPLMVLYLTDRTSAEEIRTAKASGFVHAAKLYPAGATTNSDSGVTRIDNIFEALEAMAEVGMPLLVHGEVTRAEVDVFDREKQFIDEHLRRVVERFPTLKVVFEHITTGDAAQFVREAPANVGATITAHHLLYNRNHMLVGGIRPHFYCLPILKRNTHQEALLDAAVSGNPKFFLGTDSAPHARHAKEAACGCAGCYSAYAAIELYAEAFEQRNALDKLEGFASLHGPDFYGLPRNTDRITLVREEWQAPASLPFGDFDVVPLRAGETLRWKLLEAGA.

Zn(2+)-binding residues include His-14 and His-16. Substrate contacts are provided by residues 16–18 (HLR) and Asn-42. Zn(2+)-binding residues include Lys-100, His-137, and His-175. Lys-100 carries the N6-carboxylysine modification. His-137 lines the substrate pocket. Leu-220 is a binding site for substrate. Zn(2+) is bound at residue Asp-248. Asp-248 is an active-site residue. The substrate site is built by His-252 and Ala-264.

This sequence belongs to the metallo-dependent hydrolases superfamily. DHOase family. Class II DHOase subfamily. In terms of assembly, homodimer. Requires Zn(2+) as cofactor.

It carries out the reaction (S)-dihydroorotate + H2O = N-carbamoyl-L-aspartate + H(+). Its pathway is pyrimidine metabolism; UMP biosynthesis via de novo pathway; (S)-dihydroorotate from bicarbonate: step 3/3. Functionally, catalyzes the reversible cyclization of carbamoyl aspartate to dihydroorotate. The chain is Dihydroorotase from Pseudomonas aeruginosa (strain LESB58).